The chain runs to 976 residues: Alpha-amylase (976 aa).

An N-terminal signal peptide occupies residues 1–33 (MKRGKLWGRLVSAAGLSLSIFLSSIGNVSTAYA). A disordered region spans residues 45 to 98 (TKENTESATDASSNEASDAEADNDTDEAITDASSKELSAENDGASESDSSFDEY). Positions 50-60 (ESATDASSNEA) are enriched in low complexity. 2 stretches are compositionally biased toward acidic residues: residues 61–73 (SDAEADNDTDEAI) and 87–96 (GASESDSSFD). The Ca(2+) site is built by Asn243, Thr284, and Asp293. Asp323 serves as the catalytic Nucleophile. His327 is a Ca(2+) binding site. Catalysis depends on Glu375, which acts as the Proton donor.

This sequence belongs to the glycosyl hydrolase 13 family. As to quaternary structure, monomer. The cofactor is Ca(2+).

The catalysed reaction is Endohydrolysis of (1-&gt;4)-alpha-D-glucosidic linkages in polysaccharides containing three or more (1-&gt;4)-alpha-linked D-glucose units.. This is Alpha-amylase (amyA) from Butyrivibrio fibrisolvens.